We begin with the raw amino-acid sequence, 330 residues long: ADP-L-glycero-D-manno-heptose-6-epimerase (330 aa).

Residues Phe11–Ile12, Asp32–Asp33, Gln39, Gln54, Gln75–Ala79, and Asn92 contribute to the NADP(+) site. The active-site Proton acceptor is the Tyr139. Lys143 contacts NADP(+). Asn168 provides a ligand contact to substrate. The NADP(+) site is built by Val169 and Lys177. Lys177 acts as the Proton acceptor in catalysis. Substrate-binding positions include Arg179, His186, Phe200–His203, Arg213, and Tyr292.

It belongs to the NAD(P)-dependent epimerase/dehydratase family. HldD subfamily. Homopentamer. It depends on NADP(+) as a cofactor.

The enzyme catalyses ADP-D-glycero-beta-D-manno-heptose = ADP-L-glycero-beta-D-manno-heptose. Its pathway is nucleotide-sugar biosynthesis; ADP-L-glycero-beta-D-manno-heptose biosynthesis; ADP-L-glycero-beta-D-manno-heptose from D-glycero-beta-D-manno-heptose 7-phosphate: step 4/4. It participates in bacterial outer membrane biogenesis; LPS core biosynthesis. Its function is as follows. Catalyzes the interconversion between ADP-D-glycero-beta-D-manno-heptose and ADP-L-glycero-beta-D-manno-heptose via an epimerization at carbon 6 of the heptose. The chain is ADP-L-glycero-D-manno-heptose-6-epimerase from Pseudomonas aeruginosa (strain ATCC 15692 / DSM 22644 / CIP 104116 / JCM 14847 / LMG 12228 / 1C / PRS 101 / PAO1).